The sequence spans 172 residues: 3-hydroxydecanoyl-[acyl-carrier-protein] dehydratase (172 aa).

The active site involves H71.

It belongs to the thioester dehydratase family. FabA subfamily. In terms of assembly, homodimer.

It localises to the cytoplasm. The enzyme catalyses a (3R)-hydroxyacyl-[ACP] = a (2E)-enoyl-[ACP] + H2O. The catalysed reaction is (3R)-hydroxydecanoyl-[ACP] = (2E)-decenoyl-[ACP] + H2O. It carries out the reaction (2E)-decenoyl-[ACP] = (3Z)-decenoyl-[ACP]. It participates in lipid metabolism; fatty acid biosynthesis. Functionally, necessary for the introduction of cis unsaturation into fatty acids. Catalyzes the dehydration of (3R)-3-hydroxydecanoyl-ACP to E-(2)-decenoyl-ACP and then its isomerization to Z-(3)-decenoyl-ACP. Can catalyze the dehydratase reaction for beta-hydroxyacyl-ACPs with saturated chain lengths up to 16:0, being most active on intermediate chain length. In Sodalis glossinidius (strain morsitans), this protein is 3-hydroxydecanoyl-[acyl-carrier-protein] dehydratase.